Consider the following 428-residue polypeptide: D-amino acid dehydrogenase (428 aa).

3–17 lines the FAD pocket; sequence VVILGSGVVGVASAY.

Belongs to the DadA oxidoreductase family. FAD serves as cofactor.

The enzyme catalyses a D-alpha-amino acid + A + H2O = a 2-oxocarboxylate + AH2 + NH4(+). It participates in amino-acid degradation; D-alanine degradation; NH(3) and pyruvate from D-alanine: step 1/1. Its function is as follows. Oxidative deamination of D-amino acids. The sequence is that of D-amino acid dehydrogenase from Burkholderia thailandensis (strain ATCC 700388 / DSM 13276 / CCUG 48851 / CIP 106301 / E264).